We begin with the raw amino-acid sequence, 231 residues long: 7-cyano-7-deazaguanine synthase (231 aa).

8 to 18 (FSGGQDSTTCL) lines the ATP pocket. Zn(2+) contacts are provided by cysteine 188, cysteine 197, cysteine 200, and cysteine 203.

Belongs to the QueC family. Zn(2+) serves as cofactor.

The enzyme catalyses 7-carboxy-7-deazaguanine + NH4(+) + ATP = 7-cyano-7-deazaguanine + ADP + phosphate + H2O + H(+). It participates in purine metabolism; 7-cyano-7-deazaguanine biosynthesis. Its function is as follows. Catalyzes the ATP-dependent conversion of 7-carboxy-7-deazaguanine (CDG) to 7-cyano-7-deazaguanine (preQ(0)). The protein is 7-cyano-7-deazaguanine synthase of Pectobacterium carotovorum subsp. carotovorum (strain PC1).